A 417-amino-acid polypeptide reads, in one-letter code: Argininosuccinate synthase (417 aa).

Position 8 to 16 (8 to 16) interacts with ATP; it reads AYSGGLDTS. Y87 lines the L-citrulline pocket. G117 is an ATP binding site. Residues T119, N123, and D124 each contribute to the L-aspartate site. N123 lines the L-citrulline pocket. Residues R127, S175, E259, and Y271 each contribute to the L-citrulline site.

It belongs to the argininosuccinate synthase family. Type 1 subfamily. As to quaternary structure, homotetramer.

The protein localises to the cytoplasm. The enzyme catalyses L-citrulline + L-aspartate + ATP = 2-(N(omega)-L-arginino)succinate + AMP + diphosphate + H(+). The protein operates within amino-acid biosynthesis; L-arginine biosynthesis; L-arginine from L-ornithine and carbamoyl phosphate: step 2/3. The chain is Argininosuccinate synthase from Clavibacter sepedonicus (Clavibacter michiganensis subsp. sepedonicus).